We begin with the raw amino-acid sequence, 172 residues long: MEPWAMRALDFADESGSVSCKDMHLLLWLQKRIEMHKAEQCEEEEAMTPRPTKARAPLPSAYVPPLSLPPCPRERLKGMLKEIKPRLSRNCREDPQGCLLNLLLQSHSRSPERPLQRRERRYLQRRREKLMLARRGITLQKMEMPKQTRHRKLKVLEMPSEVCAFLITVYFW.

Residues 40 to 61 (QCEEEEAMTPRPTKARAPLPSA) form a disordered region.

As to expression, very high expression in prostate and prostate cancer. Faint expression in other tissues.

This Homo sapiens (Human) protein is Putative Dresden prostate carcinoma protein 2 (HMGN2P46).